We begin with the raw amino-acid sequence, 239 residues long: Leucyl/phenylalanyl-tRNA--protein transferase (239 aa).

Belongs to the L/F-transferase family.

It localises to the cytoplasm. The catalysed reaction is N-terminal L-lysyl-[protein] + L-leucyl-tRNA(Leu) = N-terminal L-leucyl-L-lysyl-[protein] + tRNA(Leu) + H(+). It carries out the reaction N-terminal L-arginyl-[protein] + L-leucyl-tRNA(Leu) = N-terminal L-leucyl-L-arginyl-[protein] + tRNA(Leu) + H(+). It catalyses the reaction L-phenylalanyl-tRNA(Phe) + an N-terminal L-alpha-aminoacyl-[protein] = an N-terminal L-phenylalanyl-L-alpha-aminoacyl-[protein] + tRNA(Phe). In terms of biological role, functions in the N-end rule pathway of protein degradation where it conjugates Leu, Phe and, less efficiently, Met from aminoacyl-tRNAs to the N-termini of proteins containing an N-terminal arginine or lysine. This Aliivibrio fischeri (strain ATCC 700601 / ES114) (Vibrio fischeri) protein is Leucyl/phenylalanyl-tRNA--protein transferase.